The following is a 73-amino-acid chain: Capsid protein G8P (73 aa).

Residues 1-23 form the signal peptide; the sequence is MKKSLVLKASVAVATLVPMLSFA. Topologically, residues 24-44 are periplasmic; that stretch reads AEGDDPAKAAFDSLQASATEY. The chain crosses the membrane as a helical span at residues 45–65; sequence IGYAWAMVVVIVGATIGIKLF. At 66-73 the chain is on the cytoplasmic side; it reads KKFTSKAS.

The protein belongs to the inovirus capsid protein family. Homomultimerizes. There are several thousands of this protein in the phage capsid.

Its subcellular location is the virion. It is found in the host membrane. Its function is as follows. Self assembles to form a helical capsid wrapping up the viral genomic DNA. The capsid displays a filamentous structure with a length of 760-1950 nm and a width of 6-8 nm. The virion assembly and budding take place at the host inner membrane. In Escherichia coli (Bacteriophage f1), this protein is Capsid protein G8P (VIII).